A 501-amino-acid chain; its full sequence is Aldehyde dehydrogenase mpl4 (501 aa).

231–236 (GSTASG) lines the NAD(+) pocket. Catalysis depends on residues Glu253 and Cys287.

It belongs to the aldehyde dehydrogenase family.

It carries out the reaction an aldehyde + NAD(+) + H2O = a carboxylate + NADH + 2 H(+). It participates in mycotoxin biosynthesis. In terms of biological role, aldehyde dehydrogenase; part of the gene cluster that mediates the biosynthesis of the mycotoxin citrinin, a hepato-nephrotoxic compound to humans due to inhibition of respiration complex III. The pathway begins with the synthesis of a keto-aldehyde intermediate by the citrinin PKS (pksCT) from successive condensations of 4 malonyl-CoA units, presumably with a simple acetyl-CoA starter unit. Release of the keto-aldehyde intermediate is consistent with the presence of the C-terminal reductive release domain. Mp11 collaborates with pksCT by catalyzing the hydrolysis of ACP-bound acyl intermediates to free the ACP from stalled intermediates. Mpl2 then catalyzes the oxidation of the C-12 methyl of the ketone intermediate to an alcohol intermediate which is further oxidized by the oxidoreductase mpl7 to produce a bisaldehyde intermediate. The fourth catalytic step is catalyzed by the mpl4 aldehyde dehydrogenase. The final transformation is the reduction of C-3 by mpl6 to provide the chemically stable citrinin nucleus. The protein is Aldehyde dehydrogenase mpl4 of Monascus purpureus (Red mold).